Reading from the N-terminus, the 252-residue chain is Agamous-like MADS-box protein AGL6 (252 aa).

Residues 3 to 57 enclose the MADS-box domain; sequence RGRVEMKRIENKINRQVTFSKRRNGLLKKAYELSVLCDAEVALIIFSSRGKLYEF. The K-box domain maps to 86-176; the sequence is TQSWCQEVTK…KIKFETEGHA (91 aa). Residues 91–173 adopt a coiled-coil conformation; sequence QEVTKLKSKY…KQLKIKFETE (83 aa).

As to quaternary structure, forms a heterodimer with AGAMOUS. Interacts with AGL15 and AGL16. Preferentially expressed in flowers.

It localises to the nucleus. Functionally, probable transcription factor. Forms a heterodimer via the K-box domain with AG, that could be involved in genes regulation during floral meristem development. This is Agamous-like MADS-box protein AGL6 (AGL6) from Arabidopsis thaliana (Mouse-ear cress).